Consider the following 342-residue polypeptide: Heat-inducible transcription repressor HrcA (342 aa).

The protein belongs to the HrcA family.

Its function is as follows. Negative regulator of class I heat shock genes (grpE-dnaK-dnaJ and groELS operons). Prevents heat-shock induction of these operons. The polypeptide is Heat-inducible transcription repressor HrcA (Mesoplasma florum (strain ATCC 33453 / NBRC 100688 / NCTC 11704 / L1) (Acholeplasma florum)).